Reading from the N-terminus, the 491-residue chain is Meiosis-specific nuclear structural protein 1 (491 aa).

The interaction with BBOF1 stretch occupies residues 1 to 314 (MATKKRALSF…QLEETLRQRD (314 aa)). Coiled-coil stretches lie at residues 29-253 (QVMN…RAQD) and 287-410 (RVHE…AVEK). Phosphotyrosine is present on tyrosine 188.

This sequence belongs to the MNS1 family. In terms of assembly, able to form oligomers. Microtubule inner protein component of sperm flagellar doublet microtubules. Interacts with ODAD1. Interacts with BBOF1. In terms of tissue distribution, high expression in testis. Expressed in pachytene spermatocytes and post-meiotic spermatids.

The protein localises to the nucleus. It is found in the cytoplasm. It localises to the cytoskeleton. Its subcellular location is the flagellum axoneme. The protein resides in the cilium axoneme. Functionally, microtubule inner protein (MIP) part of the dynein-decorated doublet microtubules (DMTs) in cilia axoneme, which is required for motile cilia beating. May play a role in the control of meiotic division and germ cell differentiation through regulation of pairing and recombination during meiosis. Required for sperm flagella assembly. May play a role in the assembly and function of the outer dynein arm-docking complex (ODA-DC). ODA-DC mediates outer dynein arms (ODA) binding onto the axonemal doublet microtubules. The protein is Meiosis-specific nuclear structural protein 1 (Mns1) of Mus musculus (Mouse).